The primary structure comprises 198 residues: Recombination protein RecR (198 aa).

Residues 57–72 form a C4-type zinc finger; it reads CSICGHITDQDPCYIC. The Toprim domain maps to 80–175; that stretch reads SVICVVQDPK…KLSRIAHGLP (96 aa).

The protein belongs to the RecR family.

Functionally, may play a role in DNA repair. It seems to be involved in an RecBC-independent recombinational process of DNA repair. It may act with RecF and RecO. The sequence is that of Recombination protein RecR from Bacillus velezensis (strain DSM 23117 / BGSC 10A6 / LMG 26770 / FZB42) (Bacillus amyloliquefaciens subsp. plantarum).